The chain runs to 360 residues: Phospho-N-acetylmuramoyl-pentapeptide-transferase (360 aa).

The Periplasmic segment spans residues 1 to 25 (MLVWLAEHLVKYYSGFNVFSYLTFR). Residues 26–46 (AIVSLLTALFISLWMGPRMIA) form a helical membrane-spanning segment. Over 47 to 71 (RLQKLSFGQVVRNDGPESHFSKRGT) the chain is Cytoplasmic. The helical transmembrane segment at 72-92 (PTMGGIMILTSIVISVLLWAY) threads the bilayer. Position 93 (P93) is a topological domain, periplasmic. Residues 94–114 (SNPYVWCVLVVLIGYGIIGFV) form a helical membrane-spanning segment. The Cytoplasmic segment spans residues 115–131 (DDYRKVVRKDTKGLIAR). A helical transmembrane segment spans residues 132-152 (WKYFWMSVIALGVAFALYLVG). At 153 to 167 (KDTPATQLVVPFFKD) the chain is on the periplasmic side. Residues 168 to 188 (VMPQLGLFYILLSYFVIVGTG) form a helical membrane-spanning segment. Residues 189–198 (NAVNLTDGLD) lie on the Cytoplasmic side of the membrane. The helical transmembrane segment at 199 to 219 (GLAIMPTVFVAAGFALVAWAT) threads the bilayer. At 220–235 (GNMNFANYLHIPYLRH) the chain is on the periplasmic side. Residues 236 to 256 (AGELVIVCTAIVGAGLGFLWF) traverse the membrane as a helical segment. The Cytoplasmic segment spans residues 257–262 (NTYPAQ). The chain crosses the membrane as a helical span at residues 263–283 (VFMGDVGSLALGGALGIIAVL). The Periplasmic portion of the chain corresponds to 284–287 (LRQE). The chain crosses the membrane as a helical span at residues 288–308 (FLLVIMGGVFVVETLSVILQV). The Cytoplasmic segment spans residues 309–337 (GSFKLRGQRIFRMAPIHHHYELKGWPEPR). Residues 338-358 (VIVRFWIISLMLVLIGLATLK) form a helical membrane-spanning segment. Topologically, residues 359-360 (VR) are periplasmic.

This sequence belongs to the glycosyltransferase 4 family. MraY subfamily. The cofactor is Mg(2+).

It is found in the cell inner membrane. It catalyses the reaction UDP-N-acetyl-alpha-D-muramoyl-L-alanyl-gamma-D-glutamyl-meso-2,6-diaminopimeloyl-D-alanyl-D-alanine + di-trans,octa-cis-undecaprenyl phosphate = di-trans,octa-cis-undecaprenyl diphospho-N-acetyl-alpha-D-muramoyl-L-alanyl-D-glutamyl-meso-2,6-diaminopimeloyl-D-alanyl-D-alanine + UMP. Its pathway is cell wall biogenesis; peptidoglycan biosynthesis. Its function is as follows. Catalyzes the initial step of the lipid cycle reactions in the biosynthesis of the cell wall peptidoglycan: transfers peptidoglycan precursor phospho-MurNAc-pentapeptide from UDP-MurNAc-pentapeptide onto the lipid carrier undecaprenyl phosphate, yielding undecaprenyl-pyrophosphoryl-MurNAc-pentapeptide, known as lipid I. This is Phospho-N-acetylmuramoyl-pentapeptide-transferase from Salmonella gallinarum (strain 287/91 / NCTC 13346).